A 287-amino-acid polypeptide reads, in one-letter code: Membrane protein insertase YidC 2 (287 aa).

The signal sequence occupies residues 1 to 26 (MKKKKRFKQKLLIASLVIGLVAVLSG). Cysteine 27 is lipidated: N-palmitoyl cysteine. Residue cysteine 27 is the site of S-diacylglycerol cysteine attachment. A run of 5 helical transmembrane segments spans residues 65-85 (YAVG…PLMI), 135-155 (MMGC…YQAI), 178-198 (YILP…SMMG), 207-224 (AMIV…GITL), and 228-250 (LALY…NNPF).

It belongs to the OXA1/ALB3/YidC family. Type 2 subfamily.

The protein localises to the cell membrane. Its function is as follows. Required for the insertion and/or proper folding and/or complex formation of integral membrane proteins into the membrane. Involved in integration of membrane proteins that insert both dependently and independently of the Sec translocase complex, as well as at least some lipoproteins. The polypeptide is Membrane protein insertase YidC 2 (Listeria innocua serovar 6a (strain ATCC BAA-680 / CLIP 11262)).